The following is a 207-amino-acid chain: ATP-dependent Clp protease proteolytic subunit (207 aa).

Catalysis depends on serine 111, which acts as the Nucleophile. Histidine 136 is an active-site residue.

It belongs to the peptidase S14 family. In terms of assembly, fourteen ClpP subunits assemble into 2 heptameric rings which stack back to back to give a disk-like structure with a central cavity, resembling the structure of eukaryotic proteasomes.

It localises to the cytoplasm. The enzyme catalyses Hydrolysis of proteins to small peptides in the presence of ATP and magnesium. alpha-casein is the usual test substrate. In the absence of ATP, only oligopeptides shorter than five residues are hydrolyzed (such as succinyl-Leu-Tyr-|-NHMec, and Leu-Tyr-Leu-|-Tyr-Trp, in which cleavage of the -Tyr-|-Leu- and -Tyr-|-Trp bonds also occurs).. In terms of biological role, cleaves peptides in various proteins in a process that requires ATP hydrolysis. Has a chymotrypsin-like activity. Plays a major role in the degradation of misfolded proteins. This Proteus mirabilis (strain HI4320) protein is ATP-dependent Clp protease proteolytic subunit.